Here is a 720-residue protein sequence, read N- to C-terminus: Putative fatty acid oxidation complex trifunctional enzyme (720 aa).

Positions 1-384 (MQNEIKKVCV…SWKYGPFELL (384 aa)) are 3-hydroxyacyl-CoA dehydrogenase. Positions 453 to 720 (FVITTKMNCL…TIEKLKAIVK (268 aa)) are enoyl-CoA hydratase/isomerase.

This sequence in the N-terminal section; belongs to the 3-hydroxyacyl-CoA dehydrogenase family. The protein in the C-terminal section; belongs to the enoyl-CoA hydratase/isomerase family.

It catalyses the reaction a (3S)-3-hydroxyacyl-CoA + NAD(+) = a 3-oxoacyl-CoA + NADH + H(+). The enzyme catalyses a (3S)-3-hydroxyacyl-CoA = a (2E)-enoyl-CoA + H2O. The catalysed reaction is a 4-saturated-(3S)-3-hydroxyacyl-CoA = a (3E)-enoyl-CoA + H2O. It carries out the reaction a (3Z)-enoyl-CoA = a 4-saturated (2E)-enoyl-CoA. It catalyses the reaction a (3E)-enoyl-CoA = a 4-saturated (2E)-enoyl-CoA. This is Putative fatty acid oxidation complex trifunctional enzyme from Rickettsia felis (strain ATCC VR-1525 / URRWXCal2) (Rickettsia azadi).